The chain runs to 243 residues: tRNA (guanine-N(1)-)-methyltransferase (243 aa).

S-adenosyl-L-methionine-binding positions include Gly108 and 127–132 (LGDFVL).

The protein belongs to the RNA methyltransferase TrmD family. As to quaternary structure, homodimer.

It is found in the cytoplasm. It catalyses the reaction guanosine(37) in tRNA + S-adenosyl-L-methionine = N(1)-methylguanosine(37) in tRNA + S-adenosyl-L-homocysteine + H(+). In terms of biological role, specifically methylates guanosine-37 in various tRNAs. The chain is tRNA (guanine-N(1)-)-methyltransferase from Streptococcus equi subsp. zooepidemicus (strain MGCS10565).